Here is a 457-residue protein sequence, read N- to C-terminus: Ribosomal RNA-processing protein 8 (457 aa).

Residues 47–237 are disordered; sequence LEAASLSQQT…KSDSQESRAG (191 aa). The span at 51–61 shows a compositional bias: polar residues; that stretch reads SLSQQTPSLPG. Residues serine 62, serine 64, and serine 105 each carry the phosphoserine modification. Over residues 129–138 the composition is skewed to basic and acidic residues; it reads GEEKGKRKCQ. Over residues 139-183 the composition is skewed to polar residues; that stretch reads EYSSLHLTQPLDSVDQTVHNSRTSTATIDPSKPSPESMSPNSSHT. Serine 172 and serine 177 each carry phosphoserine. The segment covering 184–203 has biased composition (basic residues); that stretch reads LSRKQWRNRQKNKRRHKNKF. Residues histidine 282, glycine 317, aspartate 335, aspartate 347, methionine 348, and cysteine 364 each coordinate S-adenosyl-L-methionine.

The protein belongs to the methyltransferase superfamily. RRP8 family. In terms of assembly, component of the eNoSC complex, composed of SIRT1, SUV39H1 and RRP8.

It localises to the nucleus. Its subcellular location is the nucleolus. In terms of biological role, essential component of the eNoSC (energy-dependent nucleolar silencing) complex, a complex that mediates silencing of rDNA in response to intracellular energy status and acts by recruiting histone-modifying enzymes. The eNoSC complex is able to sense the energy status of cell: upon glucose starvation, elevation of NAD(+)/NADP(+) ratio activates SIRT1, leading to histone H3 deacetylation followed by dimethylation of H3 at 'Lys-9' (H3K9me2) by SUV39H1 and the formation of silent chromatin in the rDNA locus. In the complex, RRP8 binds to H3K9me2 and probably acts as a methyltransferase. Its substrates are however unknown. The protein is Ribosomal RNA-processing protein 8 (Rrp8) of Mus musculus (Mouse).